The chain runs to 200 residues: NADH-quinone oxidoreductase subunit C (200 aa).

Belongs to the complex I 30 kDa subunit family. NDH-1 is composed of 14 different subunits. Subunits NuoB, C, D, E, F, and G constitute the peripheral sector of the complex.

The protein localises to the cell inner membrane. It carries out the reaction a quinone + NADH + 5 H(+)(in) = a quinol + NAD(+) + 4 H(+)(out). Functionally, NDH-1 shuttles electrons from NADH, via FMN and iron-sulfur (Fe-S) centers, to quinones in the respiratory chain. The immediate electron acceptor for the enzyme in this species is believed to be ubiquinone. Couples the redox reaction to proton translocation (for every two electrons transferred, four hydrogen ions are translocated across the cytoplasmic membrane), and thus conserves the redox energy in a proton gradient. In Rhizobium etli (strain ATCC 51251 / DSM 11541 / JCM 21823 / NBRC 15573 / CFN 42), this protein is NADH-quinone oxidoreductase subunit C.